Here is a 342-residue protein sequence, read N- to C-terminus: Isopentenyl-diphosphate delta-isomerase (342 aa).

6–7 (RK) contacts substrate. FMN-binding positions include Ser63, 64-66 (SMT), Ser94, and Asn122. 94 to 96 (SMR) is a binding site for substrate. Gln157 serves as a coordination point for substrate. Glu158 is a binding site for Mg(2+). Residues Lys189, Thr219, 269–271 (GLK), and 290–291 (AG) contribute to the FMN site.

This sequence belongs to the IPP isomerase type 2 family. In terms of assembly, homooctamer. Dimer of tetramers. FMN serves as cofactor. The cofactor is NADPH. Requires Mg(2+) as cofactor.

The protein resides in the cytoplasm. It catalyses the reaction isopentenyl diphosphate = dimethylallyl diphosphate. In terms of biological role, involved in the biosynthesis of isoprenoids. Catalyzes the 1,3-allylic rearrangement of the homoallylic substrate isopentenyl (IPP) to its allylic isomer, dimethylallyl diphosphate (DMAPP). In Rickettsia bellii (strain RML369-C), this protein is Isopentenyl-diphosphate delta-isomerase.